Consider the following 325-residue polypeptide: GTP 3',8-cyclase (325 aa).

The 226-residue stretch at 1 to 226 (MNTVNYLRIS…EGACYGNGPA (226 aa)) folds into the Radical SAM core domain. Arginine 8 contacts GTP. Positions 15 and 19 each coordinate [4Fe-4S] cluster. Tyrosine 21 is an S-adenosyl-L-methionine binding site. Cysteine 22 contributes to the [4Fe-4S] cluster binding site. Arginine 60 contributes to the GTP binding site. Residue glycine 64 participates in S-adenosyl-L-methionine binding. Serine 91 is a binding site for GTP. Serine 115 contributes to the S-adenosyl-L-methionine binding site. Residue lysine 152 coordinates GTP. An S-adenosyl-L-methionine-binding site is contributed by methionine 186. 2 residues coordinate [4Fe-4S] cluster: cysteine 249 and cysteine 252. 254 to 256 (RVR) serves as a coordination point for GTP. Cysteine 266 lines the [4Fe-4S] cluster pocket.

It belongs to the radical SAM superfamily. MoaA family. Monomer and homodimer. [4Fe-4S] cluster serves as cofactor.

It catalyses the reaction GTP + AH2 + S-adenosyl-L-methionine = (8S)-3',8-cyclo-7,8-dihydroguanosine 5'-triphosphate + 5'-deoxyadenosine + L-methionine + A + H(+). Its pathway is cofactor biosynthesis; molybdopterin biosynthesis. Catalyzes the cyclization of GTP to (8S)-3',8-cyclo-7,8-dihydroguanosine 5'-triphosphate. In Gloeobacter violaceus (strain ATCC 29082 / PCC 7421), this protein is GTP 3',8-cyclase.